Reading from the N-terminus, the 518-residue chain is MKKLKINYLFIGILALLLAVALWPSIPWFGKADNRIAAIQARGELRVSTIHTPLTYNEINGKPFGLDYELAKQFADYLGVKLKVTVRQNISQLFDDLDNGNADLLAAGLVYNSERVKNYQPGPTYYSVSQQLVYKVGQYRPRTLGNLTAEQLTVAPGHVVVNDLQTLKDTKFPELSWKVDDKKGSVELMEDVIEGKLDYTIADSVAISLFQRVHPELAVALDITDEQPVTWFSPLDGDNTLSAALLDFFNEMNEDGTLARIEEKYLGHGDDFDYVDTRTFLRAVDAVLPQLKPLFEKYAEEIDWRLLAAIAYQESHWDAQATSPTGVRGMMMLTKNTAQSLGITDRTDAEQSISGGVRYLQDMMSKVPESVPENERIWFALAAYNMGYAHMLDARALTTKTKGNPDSWADVKQRLPLLSQKPYYSKLTYGYARGHEAYAYVENIRKYQISLVGYLQEKEKQATEAAMQLAQDYPAVSPTELGKEKFPFLSFLSQSSSNYLTHSPSLLFSRKGSEEKQN.

The signal sequence occupies residues 1–21; the sequence is MKKLKINYLFIGILALLLAVA. Residues 22-269 are non-LT domain; it reads LWPSIPWFGK…RIEEKYLGHG (248 aa). Residues 270 to 518 form an LT domain region; it reads DDFDYVDTRT…SRKGSEEKQN (249 aa). E314 is an active-site residue.

The protein in the N-terminal section; belongs to the bacterial solute-binding protein 3 family. This sequence in the C-terminal section; belongs to the transglycosylase Slt family.

The protein resides in the cell outer membrane. It carries out the reaction Exolytic cleavage of the (1-&gt;4)-beta-glycosidic linkage between N-acetylmuramic acid (MurNAc) and N-acetylglucosamine (GlcNAc) residues in peptidoglycan, from either the reducing or the non-reducing ends of the peptidoglycan chains, with concomitant formation of a 1,6-anhydrobond in the MurNAc residue.. Murein-degrading enzyme that degrades murein glycan strands and insoluble, high-molecular weight murein sacculi, with the concomitant formation of a 1,6-anhydromuramoyl product. Lytic transglycosylases (LTs) play an integral role in the metabolism of the peptidoglycan (PG) sacculus. Their lytic action creates space within the PG sacculus to allow for its expansion as well as for the insertion of various structures such as secretion systems and flagella. This Escherichia coli O6:H1 (strain CFT073 / ATCC 700928 / UPEC) protein is Membrane-bound lytic murein transglycosylase F.